Reading from the N-terminus, the 576-residue chain is Protein O-linked-mannose beta-1,4-N-acetylglucosaminyltransferase 2 (576 aa).

At 1-4 (MNIS) the chain is on the cytoplasmic side. A helical; Signal-anchor for type II membrane protein transmembrane segment spans residues 5-25 (AVFNALLVSIMAAVLWKHVKL). Residues 26 to 576 (LEQFYVIEEE…PFAEVLVCNT (551 aa)) are Lumenal-facing. N-linked (GlcNAc...) asparagine glycans are attached at residues Asn-98, Asn-275, Asn-335, Asn-451, Asn-539, and Asn-561. The region spanning 482–576 (RESKCQASAQ…PFAEVLVCNT (95 aa)) is the Fibronectin type-III domain.

It belongs to the glycosyltransferase 61 family.

It is found in the endoplasmic reticulum membrane. It carries out the reaction 3-O-(alpha-D-mannosyl)-L-threonyl-[protein] + UDP-N-acetyl-alpha-D-glucosamine = 3-O-(N-acetyl-beta-D-glucosaminyl-(1-&gt;4)-alpha-D-mannosyl)-L-threonyl-[protein] + UDP + H(+). It participates in protein modification; protein glycosylation. In terms of biological role, O-linked mannose beta-1,4-N-acetylglucosaminyltransferase that transfers UDP-N-acetyl-D-glucosamine to the 4-position of the mannose to generate N-acetyl-D-glucosamine-beta-1,4-O-D-mannosylprotein. Involved in the biosynthesis of the phosphorylated O-mannosyl trisaccharide (N-acetylgalactosamine-beta-3-N-acetylglucosamine-beta-4-(phosphate-6-)mannose), a carbohydrate structure present in alpha-dystroglycan (DAG1), which is required for binding laminin G-like domain-containing extracellular proteins with high affinity. This Xenopus tropicalis (Western clawed frog) protein is Protein O-linked-mannose beta-1,4-N-acetylglucosaminyltransferase 2 (pomgnt2).